The following is a 153-amino-acid chain: Neuromedin-S (153 aa).

The N-terminal stretch at 1-26 (MKHLRPQFPLILAIYCFCMLQIPSSG) is a signal peptide. Propeptides lie at residues 27-69 (FPQP…IYKR), 70-105 (FLFH…ANRR), and 106-108 (MKR). Asparagine 141 is modified (asparagine amide). The propeptide occupies 144-153 (NIEDEAQIQW).

Belongs to the NmU family.

It is found in the secreted. In terms of biological role, implicated in the regulation of circadian rhythms through autocrine and/or paracrine actions. The chain is Neuromedin-S (NMS) from Homo sapiens (Human).